A 388-amino-acid polypeptide reads, in one-letter code: Homeobox protein Hox-A13 (388 aa).

The segment at residues Gly-322–Ile-381 is a DNA-binding region (homeobox).

This sequence belongs to the Abd-B homeobox family. In terms of assembly, binds DNA as a homodimer. Interacts with MEIS1, MEIS2 and MEIS3.

The protein resides in the nucleus. In terms of biological role, sequence-specific, AT-rich binding transcription factor which is part of a developmental regulatory system that provides cells with specific positional identities on the anterior-posterior axis. Sequence-specific transcription factor which is part of a developmental regulatory system that provides cells with specific positional identities on the anterior-posterior axis. The chain is Homeobox protein Hox-A13 (HOXA13) from Homo sapiens (Human).